The following is a 319-amino-acid chain: Protoheme IX farnesyltransferase (319 aa).

Helical transmembrane passes span 34–54 (VMSL…GHIN), 55–75 (PVLG…SGAL), 95–115 (IPAG…LSGF), 119–139 (ILGL…IFFY), 155–175 (IVIG…CVTG), 182–202 (VVLF…LALF), 221–241 (VPTT…IGVV), 244–264 (FMGF…VIFV), and 291–311 (IFYL…AVLM).

The protein belongs to the UbiA prenyltransferase family. Protoheme IX farnesyltransferase subfamily.

The protein localises to the cell inner membrane. The catalysed reaction is heme b + (2E,6E)-farnesyl diphosphate + H2O = Fe(II)-heme o + diphosphate. It participates in porphyrin-containing compound metabolism; heme O biosynthesis; heme O from protoheme: step 1/1. Its function is as follows. Converts heme B (protoheme IX) to heme O by substitution of the vinyl group on carbon 2 of heme B porphyrin ring with a hydroxyethyl farnesyl side group. The sequence is that of Protoheme IX farnesyltransferase from Rhizobium rhizogenes (strain K84 / ATCC BAA-868) (Agrobacterium radiobacter).